We begin with the raw amino-acid sequence, 173 residues long: GTP-dependent dephospho-CoA kinase (173 aa).

The GTP site is built by Asp52, Val53, Val54, Asp71, Lys73, and Asp122.

The protein belongs to the GTP-dependent DPCK family.

It carries out the reaction 3'-dephospho-CoA + GTP = GDP + CoA + H(+). The protein operates within cofactor biosynthesis; coenzyme A biosynthesis. Catalyzes the GTP-dependent phosphorylation of the 3'-hydroxyl group of dephosphocoenzyme A to form coenzyme A (CoA). The polypeptide is GTP-dependent dephospho-CoA kinase (Metallosphaera sedula (strain ATCC 51363 / DSM 5348 / JCM 9185 / NBRC 15509 / TH2)).